The following is a 512-amino-acid chain: Sodium/proline symporter (512 aa).

13 helical membrane passes run 16–36 (WQTY…GFYG), 54–74 (IGPY…WMIM), 85–105 (LSAM…YFVV), 139–159 (IISG…GFVS), 174–194 (FGLI…GYLA), 200–220 (FFQG…AMMN), 240–260 (LFKG…LGYF), 286–306 (ISWM…GIAF), 327–347 (VLFH…AIMS), 381–401 (FVMI…AIAW), 410–430 (LVGN…LFAL), 438–458 (AGAV…IAWI), and 467–487 (IFGL…TYVV).

It belongs to the sodium:solute symporter (SSF) (TC 2.A.21) family.

It localises to the cell membrane. It catalyses the reaction L-proline(in) + Na(+)(in) = L-proline(out) + Na(+)(out). Catalyzes the sodium-dependent uptake of extracellular L-proline. Since most S.aureus strains are L-proline auxotrophs, this transporter may aid the bacterial persistence during an infection of tissues with low proline concentrations. This chain is Sodium/proline symporter (putP), found in Staphylococcus aureus (strain bovine RF122 / ET3-1).